The sequence spans 89 residues: Class II hydrophobin 2 (89 aa).

An N-terminal signal peptide occupies residues 1 to 15 (MKLYIAAALLTLGLA). 4 disulfides stabilise this stretch: Cys-34/Cys-74, Cys-45/Cys-66, Cys-46/Cys-58, and Cys-75/Cys-86.

It belongs to the cerato-ulmin hydrophobin family. As to quaternary structure, homodimer. Homodimers further self-assemble to form highly ordered films at water-air interfaces through intermolecular interactions.

Its subcellular location is the secreted. The protein localises to the cell wall. Its function is as follows. Aerial growth, conidiation, and dispersal of filamentous fungi in the environment rely upon a capability of their secreting small amphipathic proteins called hydrophobins (HPBs) with low sequence identity. Class I can self-assemble into an outermost layer of rodlet bundles on aerial cell surfaces, conferring cellular hydrophobicity that supports fungal growth, development and dispersal; whereas Class II form highly ordered films at water-air interfaces through intermolecular interactions but contribute nothing to the rodlet structure. The polypeptide is Class II hydrophobin 2 (Trichoderma asperellum (strain ATCC 204424 / CBS 433.97 / NBRC 101777)).